Reading from the N-terminus, the 167-residue chain is Crossover junction endodeoxyribonuclease RuvC (167 aa).

Residues aspartate 7, glutamate 67, and aspartate 139 contribute to the active site. Positions 7, 67, and 139 each coordinate Mg(2+).

The protein belongs to the RuvC family. As to quaternary structure, homodimer which binds Holliday junction (HJ) DNA. The HJ becomes 2-fold symmetrical on binding to RuvC with unstacked arms; it has a different conformation from HJ DNA in complex with RuvA. In the full resolvosome a probable DNA-RuvA(4)-RuvB(12)-RuvC(2) complex forms which resolves the HJ. Requires Mg(2+) as cofactor.

The protein resides in the cytoplasm. It catalyses the reaction Endonucleolytic cleavage at a junction such as a reciprocal single-stranded crossover between two homologous DNA duplexes (Holliday junction).. The RuvA-RuvB-RuvC complex processes Holliday junction (HJ) DNA during genetic recombination and DNA repair. Endonuclease that resolves HJ intermediates. Cleaves cruciform DNA by making single-stranded nicks across the HJ at symmetrical positions within the homologous arms, yielding a 5'-phosphate and a 3'-hydroxyl group; requires a central core of homology in the junction. The consensus cleavage sequence is 5'-(A/T)TT(C/G)-3'. Cleavage occurs on the 3'-side of the TT dinucleotide at the point of strand exchange. HJ branch migration catalyzed by RuvA-RuvB allows RuvC to scan DNA until it finds its consensus sequence, where it cleaves and resolves the cruciform DNA. The sequence is that of Crossover junction endodeoxyribonuclease RuvC from Zymomonas mobilis subsp. mobilis (strain ATCC 31821 / ZM4 / CP4).